Consider the following 258-residue polypeptide: Indole-3-glycerol phosphate synthase (258 aa).

Belongs to the TrpC family.

The catalysed reaction is 1-(2-carboxyphenylamino)-1-deoxy-D-ribulose 5-phosphate + H(+) = (1S,2R)-1-C-(indol-3-yl)glycerol 3-phosphate + CO2 + H2O. It functions in the pathway amino-acid biosynthesis; L-tryptophan biosynthesis; L-tryptophan from chorismate: step 4/5. The sequence is that of Indole-3-glycerol phosphate synthase from Endomicrobium trichonymphae.